An 852-amino-acid chain; its full sequence is Replication factor C small subunit (852 aa).

Residues 183–306 (WLGYFMGSGY…IAYALASFGI (124 aa)) form the DOD-type homing endonuclease domain.

Belongs to the activator 1 small subunits family. RfcS subfamily. As to quaternary structure, heteromultimer composed of three to four small subunits (RfcS) and one to two large subunits (RfcL). In terms of processing, this protein undergoes a protein self splicing that involves a post-translational excision of the intervening region (intein) followed by peptide ligation.

Functionally, part of the RFC clamp loader complex which loads the PCNA sliding clamp onto DNA. The complex possesses DNA-dependent ATPase activity which is further stimulated by PCNA. In Pyrococcus furiosus (strain ATCC 43587 / DSM 3638 / JCM 8422 / Vc1), this protein is Replication factor C small subunit (rfcS).